A 240-amino-acid chain; its full sequence is Purine nucleoside phosphorylase DeoD-type (240 aa).

Residue H5 participates in a purine D-ribonucleoside binding. Residues G21, R25, R44, and 88–91 contribute to the phosphate site; that span reads RVGS. Residues 181-183 and 205-206 contribute to the a purine D-ribonucleoside site; these read EME and SD. The Proton donor role is filled by D206.

Belongs to the PNP/UDP phosphorylase family. Homohexamer; trimer of homodimers.

It carries out the reaction a purine D-ribonucleoside + phosphate = a purine nucleobase + alpha-D-ribose 1-phosphate. The catalysed reaction is a purine 2'-deoxy-D-ribonucleoside + phosphate = a purine nucleobase + 2-deoxy-alpha-D-ribose 1-phosphate. Catalyzes the reversible phosphorolytic breakdown of the N-glycosidic bond in the beta-(deoxy)ribonucleoside molecules, with the formation of the corresponding free purine bases and pentose-1-phosphate. The protein is Purine nucleoside phosphorylase DeoD-type of Enterobacter sp. (strain 638).